The sequence spans 795 residues: MARPRLLVVSMSLPVTAKRTGEESWSFTMSPGGLVSALLGLKEFETKWIGWPGVDVHDAIGKKTLSITLAEKGCIPVFLEEVCDQYYNGYCNNILWPIFHYLGTPPEYRNDATITYQSQYEAYKKANQIFFDVVKEHYEEGDVVWCHDYHVMLLPQYLKEYNSKMKVGWFLHTPFPSSEMYKTLPSRSDLLRSVLTADLVGFHTYDFARHFLNACMCILGVEATSEGIVDQGKVTRVAVFPIGIEPERFINTSELSEVVQYMKKFKNDFGGRKLILGVDRLDTIKGIPQKYQAFEKFLEENAEWRGKVMLLQIAVPTRNGIGEYQKIKDQCHYHVGRINGRFGSISSVPIIHLDCSIDFNQLCALYAITDVLLVTSLRDGMNLVSSEFIACQKAEKGVLILSEFAGAGQSLGAGAILVNPWNIKEVSSAIGEALNMSHEEKERKHKINFQYVKTHSTQQWADDFMKLTLTNILCSKLIEITTSAELGAGLAATLELPEHDVIQQYSKSNNRLLILGFYGTLTQPMKNQERRGDGMNLELHPQLKERLKELCSDPKTTVVVLSRSEKCILDKNFGEYNMWLAAENGMFLRHTSGEWVTRIPEHMNLEWIDGVKHVFKYFTERTPGSYLETSEASLVWNYENADAEFGRAQARDMLQHLWAGPISNASVDVVRGGQSVEVHAVGVTKGSAMERILGEIVHNKSMATPIDYVLCIGCFLGKDEDVYTFFEPELTKKAKSLSSSGSDSPKKVSSTIVDLKGENYFSVAIGQTHTKARYFLDSSDDVVKLIGKLCTHNNA.

A glycosyltransferase region spans residues 4-469 (PRLLVVSMSL…WADDFMKLTL (466 aa)).

In the N-terminal section; belongs to the glycosyltransferase 20 family. It in the C-terminal section; belongs to the trehalose phosphatase family.

It carries out the reaction D-glucose 6-phosphate + UDP-alpha-D-glucose = alpha,alpha-trehalose 6-phosphate + UDP + H(+). In Arabidopsis thaliana (Mouse-ear cress), this protein is Probable alpha,alpha-trehalose-phosphate synthase [UDP-forming] 4 (TPS4).